We begin with the raw amino-acid sequence, 1423 residues long: uncharacterized protein (1423 aa).

An N-terminal signal peptide occupies residues 1–28; it reads MTSSVRLAFLATLLLLLPLEAQIQQANS. The Extracellular segment spans residues 29–1321; that stretch reads ANVNQNVGQQ…RSREKQNFLT (1293 aa). Asn94, Asn306, Asn355, Asn483, Asn666, and Asn903 each carry an N-linked (GlcNAc...) asparagine glycan. The region spanning 184 to 347 is the NIDO domain; it reads SFFGQSASKA…GRYMFRVDDV (164 aa). Residues 638–818 form the AMOP domain; that stretch reads VKKKSLEMCH…FRCQMFYWRR (181 aa). Residues 1322–1342 traverse the membrane as a helical segment; the sequence is WLAIIGGIFGVLVFVILIFLC. Over 1343–1423 the chain is Cytoplasmic; the sequence is CWIVKQKKKG…EDLHGLKTSV (81 aa). A disordered region spans residues 1364 to 1401; it reads SRSSMTGSRGGKKYPIHESEPLNEKRFDADTYRDDDFY. The segment covering 1378-1401 has biased composition (basic and acidic residues); the sequence is PIHESEPLNEKRFDADTYRDDDFY.

Its subcellular location is the membrane. This is an uncharacterized protein from Caenorhabditis elegans.